Reading from the N-terminus, the 327-residue chain is Auxin-responsive protein IAA18 (327 aa).

Disordered stretches follow at residues 26–45 (VKEA…DEDK), 52–98 (GLPG…IGTT), and 180–202 (NLTN…DDKA). The EAR-like (transcriptional repression) motif lies at 49–53 (LKLGL). Residues 58–69 (QEERAADSREKI) are compositionally biased toward basic and acidic residues. The segment covering 70-82 (QQQQRESSSEPSI) has biased composition (low complexity). Residues 180 to 189 (NLTNGSSFKQ) are compositionally biased toward polar residues. Residues 190 to 202 (SPERQNDEADDKA) show a composition bias toward basic and acidic residues. In terms of domain architecture, PB1 spans 209-313 (RPLVKINMDG…TVKRLRVMRR (105 aa)).

Belongs to the Aux/IAA family. In terms of assembly, homodimers and heterodimers. Highly expressed in flowers. Expressed in roots and etiolated seedlings.

It is found in the nucleus. Functionally, aux/IAA proteins are short-lived transcriptional factors that function as repressors of early auxin response genes at low auxin concentrations. This Oryza sativa subsp. japonica (Rice) protein is Auxin-responsive protein IAA18 (IAA18).